We begin with the raw amino-acid sequence, 370 residues long: Cytochrome b (370 aa).

4 consecutive transmembrane segments (helical) span residues 25 to 45 (FGSM…FLAI), 69 to 90 (WIMQ…YIHI), 105 to 125 (WLSG…GYVL), and 170 to 190 (FFAL…IHII). Heme b-binding residues include His75 and His89. Residues His174 and His188 each coordinate heme b. His193 lines the a ubiquinone pocket. The next 4 membrane-spanning stretches (helical) occupy residues 218-238 (YKDM…MSFT), 280-300 (LGGT…PFTH), 312-332 (LTQI…WTAT), and 339-358 (FISI…IINP).

It belongs to the cytochrome b family. In terms of assembly, the cytochrome bc1 complex contains 3 respiratory subunits (MT-CYB, CYC1 and UQCRFS1), 2 core proteins (UQCRC1 and UQCRC2) and probably 6 low-molecular weight proteins. Requires heme b as cofactor.

It is found in the mitochondrion inner membrane. In terms of biological role, component of the ubiquinol-cytochrome c reductase complex (complex III or cytochrome b-c1 complex) that is part of the mitochondrial respiratory chain. The b-c1 complex mediates electron transfer from ubiquinol to cytochrome c. Contributes to the generation of a proton gradient across the mitochondrial membrane that is then used for ATP synthesis. This chain is Cytochrome b (MT-CYB), found in Bungarus fasciatus (Banded krait).